Consider the following 288-residue polypeptide: Serine/threonine-protein phosphatase PGAM5, mitochondrial (288 aa).

The Mitochondrial matrix portion of the chain corresponds to 1 to 6 (MAFRQA). A helical membrane pass occupies residues 7-29 (LQLAACGLAGGSAAVLFSAVAVG). Topologically, residues 30–288 (KPRGGGDADT…FMPPDKITRS (259 aa)) are mitochondrial intermembrane. An interaction with KEAP1 region spans residues 76 to 81 (NVESGE). Phosphoserine occurs at positions 79 and 86. An N6-acetyllysine mark is found at Lys115, Lys143, and Lys190.

The protein belongs to the phosphoglycerate mutase family. BPG-dependent PGAM subfamily. As to quaternary structure, dimer. Forms a ternary complex with NFE2L2 and KEAP1. Interacts with BCL2L1 and MAP3K5. Upon TNF-induced necrosis, forms in complex with RIPK1, RIPK3 and MLKL; the formation of this complex leads to PGAM5 phosphorylation. Isoform 2, but not isoform 1, interacts with DNM1L; this interaction leads to DNM1L dephosphorylation and activation and eventually to mitochondria fragmentation. In terms of processing, phosphorylated by the RIPK1/RIPK3 complex under necrotic conditions. This phosphorylation increases PGAM5 phosphatase activity. Proteolytically cleaved by PARL in response to loss of mitochondrial membrane potential.

Its subcellular location is the mitochondrion outer membrane. It localises to the mitochondrion inner membrane. The catalysed reaction is O-phospho-L-seryl-[protein] + H2O = L-seryl-[protein] + phosphate. The enzyme catalyses O-phospho-L-threonyl-[protein] + H2O = L-threonyl-[protein] + phosphate. In terms of biological role, mitochondrial serine/threonine phosphatase that dephosphorylates various substrates and thus plays a role in different biological processes including cellular senescence or mitophagy. Modulates cellular senescence by regulating mitochondrial dynamics. Mechanistically, participates in mitochondrial fission through dephosphorylating DNM1L/DRP1. Additionally, dephosphorylates MFN2 in a stress-sensitive manner and consequently protects it from ubiquitination and degradation to promote mitochondrial network formation. Regulates mitophagy independent of PARKIN by interacting with and dephosphorylating FUNDC1, which interacts with LC3. Regulates anti-oxidative response by forming a tertiary complex with KEAP1 and NRF2. Regulates necroptosis by acting as a RIPK3 target and recruiting the RIPK1-RIPK3-MLKL necrosis 'attack' complex to mitochondria. The chain is Serine/threonine-protein phosphatase PGAM5, mitochondrial (Pgam5) from Mus musculus (Mouse).